Here is a 273-residue protein sequence, read N- to C-terminus: MPEMPEVETVRRTLRPLVVGKTIDHVDIWYDKVITGDPETFKRELKGKTFTVVDRYAKFLLFRLGDLTVVSHLRMEGKYHLTTWDAPVDKHEHLQFAFTDGSSLRYADVRKFGRLQLVETGTEFQVTGLKNLGVEANSPEFRLDYFEKGLKKRSMNIKSLLMSQTLVAGLGNIYVDEVLWQSRINPLTPANELTKDQVKQLHSAINETIEEATKYGGTTVHSFLNAEGGAGHYQEKLKVYGKEGQPCPRCGEDFVKIKICGRGTTYCLHCQKR.

The active-site Schiff-base intermediate with DNA is Pro2. Residue Glu3 is the Proton donor of the active site. The active-site Proton donor; for beta-elimination activity is Lys58. Residues His91, Arg110, and Arg153 each contribute to the DNA site. Residues 238–272 (KVYGKEGQPCPRCGEDFVKIKICGRGTTYCLHCQK) form an FPG-type zinc finger. The Proton donor; for delta-elimination activity role is filled by Arg262.

The protein belongs to the FPG family. As to quaternary structure, monomer. Zn(2+) is required as a cofactor.

It catalyses the reaction Hydrolysis of DNA containing ring-opened 7-methylguanine residues, releasing 2,6-diamino-4-hydroxy-5-(N-methyl)formamidopyrimidine.. It carries out the reaction 2'-deoxyribonucleotide-(2'-deoxyribose 5'-phosphate)-2'-deoxyribonucleotide-DNA = a 3'-end 2'-deoxyribonucleotide-(2,3-dehydro-2,3-deoxyribose 5'-phosphate)-DNA + a 5'-end 5'-phospho-2'-deoxyribonucleoside-DNA + H(+). Its function is as follows. Involved in base excision repair of DNA damaged by oxidation or by mutagenic agents. Acts as a DNA glycosylase that recognizes and removes damaged bases. Has a preference for oxidized purines, such as 7,8-dihydro-8-oxoguanine (8-oxoG). Has AP (apurinic/apyrimidinic) lyase activity and introduces nicks in the DNA strand. Cleaves the DNA backbone by beta-delta elimination to generate a single-strand break at the site of the removed base with both 3'- and 5'-phosphates. The protein is Formamidopyrimidine-DNA glycosylase of Lactobacillus delbrueckii subsp. bulgaricus (strain ATCC BAA-365 / Lb-18).